Here is a 448-residue protein sequence, read N- to C-terminus: MQVPKNNIYTVSRLNGEVRQILEGQLGKVWLNGEISNFSAPSSGHWYLTLKDHYSQIRCAMFKGRNQSVSFKPVNGQQVLVKGAISVYEPRGDYQLLIESMLPAGDGLLAQQFEALKMKLAAQGLFAADTKRQLPKNIQRIGVITSPSGAAIRDVLHVLARRDPSIEVIIYPTQVQGESADLNICQAINIANQRLEVDVLLLTRGGGSLEDLWCFNSEALAHTIYNSALPVVSAVGHEVDTTISDYVADVRAPTPSAGAELLSQDSDNKSQRLATVLSRLKQSASHYQLKQERRLSLLEHRLQRLDPKRTLQQFEQRFDEMQLRLEAALSNKLHGLSRRQQQLASRLEQQSPKHKLALETNRLSYLATRLQDAMQDTLNQSEQRVKYAAHQLETVSPLATLSRGYSITTDANHQVIDNAAQLSVGDKINTRLRHGQVQSTVTQITDES.

It belongs to the XseA family. As to quaternary structure, heterooligomer composed of large and small subunits.

The protein localises to the cytoplasm. It catalyses the reaction Exonucleolytic cleavage in either 5'- to 3'- or 3'- to 5'-direction to yield nucleoside 5'-phosphates.. Its function is as follows. Bidirectionally degrades single-stranded DNA into large acid-insoluble oligonucleotides, which are then degraded further into small acid-soluble oligonucleotides. The sequence is that of Exodeoxyribonuclease 7 large subunit from Shewanella sp. (strain MR-4).